A 403-amino-acid chain; its full sequence is Argininosuccinate synthase (403 aa).

An ATP-binding site is contributed by 10 to 18 (AYSGGLDTS). Residue Y87 participates in L-citrulline binding. ATP is bound at residue G117. Residues T119, N123, and D124 each contribute to the L-aspartate site. N123 lines the L-citrulline pocket. L-citrulline is bound by residues R127, S175, E260, and Y272.

Belongs to the argininosuccinate synthase family. Type 1 subfamily. In terms of assembly, homotetramer.

The protein resides in the cytoplasm. The enzyme catalyses L-citrulline + L-aspartate + ATP = 2-(N(omega)-L-arginino)succinate + AMP + diphosphate + H(+). The protein operates within amino-acid biosynthesis; L-arginine biosynthesis; L-arginine from L-ornithine and carbamoyl phosphate: step 2/3. This Bacillus velezensis (strain DSM 23117 / BGSC 10A6 / LMG 26770 / FZB42) (Bacillus amyloliquefaciens subsp. plantarum) protein is Argininosuccinate synthase.